We begin with the raw amino-acid sequence, 376 residues long: Alpha-2,8-sialyltransferase 8E (376 aa).

A helical membrane pass occupies residues 17 to 37 (TLLFIFICAFALVTLLQQILY). Asn56 carries N-linked (GlcNAc...) asparagine glycosylation. Intrachain disulfides connect Cys164–Cys313 and Cys178–Cys373. Residues Asn192 and 214–216 (NPS) each bind substrate. The N-linked (GlcNAc...) asparagine glycan is linked to Asn241. 300–302 (STG) contributes to the substrate binding site. The active-site Proton donor/acceptor is His348.

Belongs to the glycosyltransferase 29 family. As to expression, expressed in liver.

The protein resides in the golgi apparatus membrane. The enzyme catalyses a ganglioside GT1b (d18:1(4E)) + CMP-N-acetyl-beta-neuraminate = a ganglioside GQ1b (d18:1(4E)) + CMP + H(+). The catalysed reaction is a ganglioside GQ1c (d18:1(4E)) + CMP-N-acetyl-beta-neuraminate = a ganglioside GP1c (d18:1(4E)) + CMP + H(+). It catalyses the reaction a ganglioside GD3 (d18:1(4E)) + CMP-N-acetyl-beta-neuraminate = a ganglioside GT3 (d18:1(4E)) + CMP + H(+). It carries out the reaction a ganglioside GD1a (d18:1(4E)) + CMP-N-acetyl-beta-neuraminate = a ganglioside GT1a (d18:1(4E)) + CMP + H(+). The enzyme catalyses a ganglioside GM1b (d18:1(4E)) + CMP-N-acetyl-beta-neuraminate = a ganglioside GD1c (d18:1(4E)) + CMP + H(+). The protein operates within protein modification; protein glycosylation. Functionally, involved in the synthesis of gangliosides GD1c, GT1a, GQ1b, GP1c and GT3 from GD1a, GT1b, GM1b and GD3 respectively. The protein is Alpha-2,8-sialyltransferase 8E of Rattus norvegicus (Rat).